A 470-amino-acid polypeptide reads, in one-letter code: ATP synthase subunit beta (470 aa).

An ATP-binding site is contributed by 157 to 164 (GGAGVGKT).

The protein belongs to the ATPase alpha/beta chains family. In terms of assembly, F-type ATPases have 2 components, CF(1) - the catalytic core - and CF(0) - the membrane proton channel. CF(1) has five subunits: alpha(3), beta(3), gamma(1), delta(1), epsilon(1). CF(0) has three main subunits: a(1), b(2) and c(9-12). The alpha and beta chains form an alternating ring which encloses part of the gamma chain. CF(1) is attached to CF(0) by a central stalk formed by the gamma and epsilon chains, while a peripheral stalk is formed by the delta and b chains.

The protein localises to the cell inner membrane. The enzyme catalyses ATP + H2O + 4 H(+)(in) = ADP + phosphate + 5 H(+)(out). Functionally, produces ATP from ADP in the presence of a proton gradient across the membrane. The catalytic sites are hosted primarily by the beta subunits. In Geobacter sp. (strain M21), this protein is ATP synthase subunit beta.